Here is a 75-residue protein sequence, read N- to C-terminus: RNA-binding protein KhpA (75 aa).

Residues 29 to 75 (SIIIELKVAPEDMGKVIGKQGRIAQAIRTLVKAAALKEKKRVIVEII) form the KH domain.

The protein belongs to the KhpA RNA-binding protein family. As to quaternary structure, forms a complex with KhpB.

It is found in the cytoplasm. Its function is as follows. A probable RNA chaperone. Forms a complex with KhpB which binds to cellular RNA and controls its expression. Plays a role in peptidoglycan (PG) homeostasis and cell length regulation. The sequence is that of RNA-binding protein KhpA from Caldanaerobacter subterraneus subsp. tengcongensis (strain DSM 15242 / JCM 11007 / NBRC 100824 / MB4) (Thermoanaerobacter tengcongensis).